The following is a 947-amino-acid chain: Protein translocase subunit SecA 1 (947 aa).

ATP-binding positions include Gln-83, 101–105, and Asp-490; that span reads GEGKT. The segment at 860–947 is disordered; sequence AKAQEQTGQG…KTSKPTRRRG (88 aa). The segment covering 925–934 has biased composition (basic and acidic residues); the sequence is TRRERREAAR. A compositionally biased stretch (basic residues) spans 935 to 947; sequence KQAKTSKPTRRRG.

The protein belongs to the SecA family. Monomer and homodimer. Part of the essential Sec protein translocation apparatus which comprises SecA, SecYEG and auxiliary proteins SecDF. Other proteins may also be involved.

The protein localises to the cell membrane. It is found in the cytoplasm. It catalyses the reaction ATP + H2O + cellular proteinSide 1 = ADP + phosphate + cellular proteinSide 2.. Its function is as follows. Part of the Sec protein translocase complex. Interacts with the SecYEG preprotein conducting channel. Has a central role in coupling the hydrolysis of ATP to the transfer of proteins into and across the cell membrane, serving as an ATP-driven molecular motor driving the stepwise translocation of polypeptide chains across the membrane. The protein is Protein translocase subunit SecA 1 of Mycobacterium sp. (strain JLS).